We begin with the raw amino-acid sequence, 183 residues long: Ribosome-recycling factor (183 aa).

It belongs to the RRF family.

The protein localises to the cytoplasm. Functionally, responsible for the release of ribosomes from messenger RNA at the termination of protein biosynthesis. May increase the efficiency of translation by recycling ribosomes from one round of translation to another. The chain is Ribosome-recycling factor from Ureaplasma urealyticum serovar 10 (strain ATCC 33699 / Western).